The primary structure comprises 131 residues: uncharacterized protein (131 aa).

A disordered region spans residues 13–32; that stretch reads TYSPLPEPPPTPALGGQRGP.

This is an uncharacterized protein from Homo sapiens (Human).